A 124-amino-acid chain; its full sequence is Fluoride-specific ion channel FluC (124 aa).

4 helical membrane-spanning segments follow: residues 1-21 (MIGV…LRFA), 34-54 (FYAA…YLYG), 62-82 (VPLA…TTFS), and 101-121 (FSYL…GLIL). Residues G76 and T79 each contribute to the Na(+) site.

The protein belongs to the fluoride channel Fluc/FEX (TC 1.A.43) family.

The protein resides in the cell inner membrane. The catalysed reaction is fluoride(in) = fluoride(out). Na(+) is not transported, but it plays an essential structural role and its presence is essential for fluoride channel function. Functionally, fluoride-specific ion channel. Important for reducing fluoride concentration in the cell, thus reducing its toxicity. This chain is Fluoride-specific ion channel FluC, found in Azotobacter vinelandii (strain DJ / ATCC BAA-1303).